Here is a 111-residue protein sequence, read N- to C-terminus: Large ribosomal subunit protein uL23 (111 aa).

Belongs to the universal ribosomal protein uL23 family. In terms of assembly, part of the 50S ribosomal subunit. Contacts protein L29, and trigger factor when it is bound to the ribosome.

Functionally, one of the early assembly proteins it binds 23S rRNA. One of the proteins that surrounds the polypeptide exit tunnel on the outside of the ribosome. Forms the main docking site for trigger factor binding to the ribosome. The protein is Large ribosomal subunit protein uL23 of Chlamydia trachomatis serovar L2 (strain ATCC VR-902B / DSM 19102 / 434/Bu).